We begin with the raw amino-acid sequence, 227 residues long: Cytochrome c oxidase subunit 2 (227 aa).

The Mitochondrial intermembrane portion of the chain corresponds to 1–14 (MAYPFQLGLQDATS). The helical transmembrane segment at 15–45 (PIMEELTNFHDHTLMIVFLISSLVLYIISLM) threads the bilayer. The Mitochondrial matrix portion of the chain corresponds to 46–59 (LTTKLTHTSTMDAQ). Residues 60-87 (EVETIWTILPAAILVLIALPSLRILYMM) traverse the membrane as a helical segment. Over 88 to 227 (DEINNPVLTV…HFENWSASMV (140 aa)) the chain is Mitochondrial intermembrane. His-161, Cys-196, Glu-198, Cys-200, His-204, and Met-207 together coordinate Cu cation. Glu-198 serves as a coordination point for Mg(2+).

The protein belongs to the cytochrome c oxidase subunit 2 family. Component of the cytochrome c oxidase (complex IV, CIV), a multisubunit enzyme composed of 14 subunits. The complex is composed of a catalytic core of 3 subunits MT-CO1, MT-CO2 and MT-CO3, encoded in the mitochondrial DNA, and 11 supernumerary subunits COX4I, COX5A, COX5B, COX6A, COX6B, COX6C, COX7A, COX7B, COX7C, COX8 and NDUFA4, which are encoded in the nuclear genome. The complex exists as a monomer or a dimer and forms supercomplexes (SCs) in the inner mitochondrial membrane with NADH-ubiquinone oxidoreductase (complex I, CI) and ubiquinol-cytochrome c oxidoreductase (cytochrome b-c1 complex, complex III, CIII), resulting in different assemblies (supercomplex SCI(1)III(2)IV(1) and megacomplex MCI(2)III(2)IV(2)). Found in a complex with TMEM177, COA6, COX18, COX20, SCO1 and SCO2. Interacts with TMEM177 in a COX20-dependent manner. Interacts with COX20. Interacts with COX16. Requires Cu cation as cofactor.

Its subcellular location is the mitochondrion inner membrane. It catalyses the reaction 4 Fe(II)-[cytochrome c] + O2 + 8 H(+)(in) = 4 Fe(III)-[cytochrome c] + 2 H2O + 4 H(+)(out). Functionally, component of the cytochrome c oxidase, the last enzyme in the mitochondrial electron transport chain which drives oxidative phosphorylation. The respiratory chain contains 3 multisubunit complexes succinate dehydrogenase (complex II, CII), ubiquinol-cytochrome c oxidoreductase (cytochrome b-c1 complex, complex III, CIII) and cytochrome c oxidase (complex IV, CIV), that cooperate to transfer electrons derived from NADH and succinate to molecular oxygen, creating an electrochemical gradient over the inner membrane that drives transmembrane transport and the ATP synthase. Cytochrome c oxidase is the component of the respiratory chain that catalyzes the reduction of oxygen to water. Electrons originating from reduced cytochrome c in the intermembrane space (IMS) are transferred via the dinuclear copper A center (CU(A)) of subunit 2 and heme A of subunit 1 to the active site in subunit 1, a binuclear center (BNC) formed by heme A3 and copper B (CU(B)). The BNC reduces molecular oxygen to 2 water molecules using 4 electrons from cytochrome c in the IMS and 4 protons from the mitochondrial matrix. The chain is Cytochrome c oxidase subunit 2 (MT-CO2) from Uromys caudimaculatus (Giant white-tailed rat).